Reading from the N-terminus, the 129-residue chain is Small ribosomal subunit protein uS11 (129 aa).

It belongs to the universal ribosomal protein uS11 family. Part of the 30S ribosomal subunit. Interacts with proteins S7 and S18. Binds to IF-3.

Its function is as follows. Located on the platform of the 30S subunit, it bridges several disparate RNA helices of the 16S rRNA. Forms part of the Shine-Dalgarno cleft in the 70S ribosome. The chain is Small ribosomal subunit protein uS11 from Francisella tularensis subsp. holarctica (strain FTNF002-00 / FTA).